A 330-amino-acid polypeptide reads, in one-letter code: Type I restriction enzyme MpnII specificity subunit (330 aa).

It belongs to the type-I restriction system S methylase family. The methyltransferase is composed of M and S polypeptides.

In terms of biological role, the specificity (S) subunit of a type I restriction enzyme; this subunit dictates DNA sequence specificity. The M and S subunits together form a methyltransferase (MTase) that probably methylates A-2 on the top strand and A-3 on the bottom strand of the sequence 5'-GAN(7)TAY-3'. As the bacterial DNA is methylated on this sequence and this is the only type I methylase in the genome, it is probably responsible for all of the methylation on this site in the genome. The R subunit has multiple frameshifts and is probably not expressed in this bacteria. The protein is Type I restriction enzyme MpnII specificity subunit of Mycoplasma pneumoniae (strain ATCC 29342 / M129 / Subtype 1) (Mycoplasmoides pneumoniae).